The primary structure comprises 565 residues: NAD-dependent malic enzyme (565 aa).

Residue Tyr104 is the Proton donor of the active site. NAD(+) is bound at residue Arg157. The active-site Proton acceptor is the Lys175. A divalent metal cation contacts are provided by Glu246, Asp247, and Asp270. Residues Asp270 and Asn418 each contribute to the NAD(+) site.

It belongs to the malic enzymes family. In terms of assembly, homotetramer. Requires Mg(2+) as cofactor. The cofactor is Mn(2+).

The catalysed reaction is (S)-malate + NAD(+) = pyruvate + CO2 + NADH. The enzyme catalyses oxaloacetate + H(+) = pyruvate + CO2. The protein is NAD-dependent malic enzyme of Photorhabdus laumondii subsp. laumondii (strain DSM 15139 / CIP 105565 / TT01) (Photorhabdus luminescens subsp. laumondii).